The primary structure comprises 220 residues: RNA-free ribonuclease P (220 aa).

This sequence belongs to the HARP family.

It carries out the reaction Endonucleolytic cleavage of RNA, removing 5'-extranucleotides from tRNA precursor.. In terms of biological role, RNA-free RNase P that catalyzes the removal of the 5'-leader sequence from pre-tRNA to produce the mature 5'-terminus. This is RNA-free ribonuclease P from Methanothermobacter thermautotrophicus (strain ATCC 29096 / DSM 1053 / JCM 10044 / NBRC 100330 / Delta H) (Methanobacterium thermoautotrophicum).